The chain runs to 167 residues: MADDATRKAVSEIPLLKTNSGPRDKELWVQRLREEYLALIKYVENNKTADNDWFRLESNKEGTRWFGKCWYIHDLLKYEFDMEFDIPVTYPSTAPEIAIPELDGKTAKMYRGGKICLTDHFKPLWARNVPKFGLAHLMALGLGPWLAVEIPDLISKGLITHREQQGS.

The active-site Glycyl thioester intermediate is the Cys-116.

The protein belongs to the ubiquitin-conjugating enzyme family. UFC1 subfamily. In terms of assembly, interacts with UBA5 (via C-terminus). Interacts with UFL1. Interacts with UFM1.

Its function is as follows. E2-like enzyme which specifically catalyzes the second step in ufmylation. Accepts the ubiquitin-like modifier UFM1 from the E1 enzyme UBA5 and forms an intermediate with UFM1 via a thioester linkage. Ufmylation is involved in various processes, such as ribosome recycling, response to DNA damage, interferon response or reticulophagy (also called ER-phagy). This is Ubiquitin-fold modifier-conjugating enzyme 1 from Salmo salar (Atlantic salmon).